The sequence spans 493 residues: Probable cytosol aminopeptidase (493 aa).

Residues Lys-259 and Asp-264 each contribute to the Mn(2+) site. Lys-271 is a catalytic residue. Mn(2+) is bound by residues Asp-282, Asp-341, and Glu-343. Arg-345 is an active-site residue.

It belongs to the peptidase M17 family. Mn(2+) serves as cofactor.

The protein localises to the cytoplasm. The enzyme catalyses Release of an N-terminal amino acid, Xaa-|-Yaa-, in which Xaa is preferably Leu, but may be other amino acids including Pro although not Arg or Lys, and Yaa may be Pro. Amino acid amides and methyl esters are also readily hydrolyzed, but rates on arylamides are exceedingly low.. It carries out the reaction Release of an N-terminal amino acid, preferentially leucine, but not glutamic or aspartic acids.. Its function is as follows. Presumably involved in the processing and regular turnover of intracellular proteins. Catalyzes the removal of unsubstituted N-terminal amino acids from various peptides. This is Probable cytosol aminopeptidase from Bacillus cytotoxicus (strain DSM 22905 / CIP 110041 / 391-98 / NVH 391-98).